A 67-amino-acid chain; its full sequence is Conotoxin Cl6.6b (67 aa).

Residues 1–24 form the signal peptide; the sequence is MKLTCVLIAAVLLLAVCQLDSADA. The propeptide occupies 25–37; it reads TGYMRKNPSLRSP. Cystine bridges form between Cys-43/Cys-57, Cys-50/Cys-61, and Cys-56/Cys-65.

This sequence belongs to the conotoxin O1 superfamily. In terms of tissue distribution, expressed by the venom duct.

It is found in the secreted. This Californiconus californicus (California cone) protein is Conotoxin Cl6.6b.